Reading from the N-terminus, the 632-residue chain is MKPTNEPKKPFFQSPIVLAVLGGILLIFFLRSFNSDGSFSDNFLASSTKNVSYHEIKQLISNNEVENVSIGQTLIKASHKEGNNRVIYIAKRVPDLTLVPLLDEKKINYSGFSESNFFTDMLGWLMPILVILGLWMFMANRMQKNMGGGIFGMGSAKKLINAEKPNVRFNDMAGNEEAKEEVVEIVDFLKYPERYANLGAKIPKGVLLVGPPGTGKTLLAKAVAGEAHVPFFSMGGSSFIEMFVGLGASRVRDLFETAKKQAPSIIFIDEIDAIGKSRAAGGMISGNDEREQTLNQLLAEMDGFGSENAPVIVLAATNRPEILDPALMRPGRFDRQVLVDKPDFNGRVEILKVHIKGVKLANDVNLQEVAKLTAGLAGADLANIINEAALLAGRNNQKEVKQQHLKEAVERGIAGLEKKSRRISPKEKKIVAYHESGHAVISEMTKGSTRVNKVSIIPRGMAALGYTLNTPEENKYLMQKHELIAEIDVLLGGRAAEEVFLEEISTGASNDLERATDIIKGMVSYYGMSSVSGLMVLEKQRNAFLGGGYGSSREFSEKTAEEMDLFIKNLLEERYQHVKQTLSDYREAIEIMVKELFDKEVITGERVREIISEYEAANNLESRLIPLEEQAS.

At 1–9 (MKPTNEPKK) the chain is on the cytoplasmic side. The helical transmembrane segment at 10–30 (PFFQSPIVLAVLGGILLIFFL) threads the bilayer. Residues 31-116 (RSFNSDGSFS…INYSGFSESN (86 aa)) are Periplasmic-facing. A helical transmembrane segment spans residues 117–137 (FFTDMLGWLMPILVILGLWMF). At 138-632 (MANRMQKNMG…RLIPLEEQAS (495 aa)) the chain is on the cytoplasmic side. 210–217 (GPPGTGKT) contributes to the ATP binding site. H434 lines the Zn(2+) pocket. E435 is an active-site residue. The Zn(2+) site is built by H438 and D511.

In the central section; belongs to the AAA ATPase family. It in the C-terminal section; belongs to the peptidase M41 family. In terms of assembly, homohexamer. Zn(2+) serves as cofactor.

The protein resides in the cell inner membrane. Its function is as follows. Acts as a processive, ATP-dependent zinc metallopeptidase for both cytoplasmic and membrane proteins. Plays a role in the quality control of integral membrane proteins. In Helicobacter pylori (strain J99 / ATCC 700824) (Campylobacter pylori J99), this protein is ATP-dependent zinc metalloprotease FtsH.